We begin with the raw amino-acid sequence, 203 residues long: Histidine biosynthesis bifunctional protein HisIE (203 aa).

The phosphoribosyl-AMP cyclohydrolase stretch occupies residues 1-108; the sequence is MELDFDKMNG…GEKNEEPVMF (108 aa). Residues 109 to 203 form a phosphoribosyl-ATP pyrophosphohydrolase region; that stretch reads LKALQDFIDK…ERHSSTWKKH (95 aa).

In the N-terminal section; belongs to the PRA-CH family. The protein in the C-terminal section; belongs to the PRA-PH family.

It is found in the cytoplasm. It catalyses the reaction 1-(5-phospho-beta-D-ribosyl)-ATP + H2O = 1-(5-phospho-beta-D-ribosyl)-5'-AMP + diphosphate + H(+). The enzyme catalyses 1-(5-phospho-beta-D-ribosyl)-5'-AMP + H2O = 1-(5-phospho-beta-D-ribosyl)-5-[(5-phospho-beta-D-ribosylamino)methylideneamino]imidazole-4-carboxamide. The protein operates within amino-acid biosynthesis; L-histidine biosynthesis; L-histidine from 5-phospho-alpha-D-ribose 1-diphosphate: step 2/9. It participates in amino-acid biosynthesis; L-histidine biosynthesis; L-histidine from 5-phospho-alpha-D-ribose 1-diphosphate: step 3/9. The polypeptide is Histidine biosynthesis bifunctional protein HisIE (Bacteroides thetaiotaomicron (strain ATCC 29148 / DSM 2079 / JCM 5827 / CCUG 10774 / NCTC 10582 / VPI-5482 / E50)).